The chain runs to 362 residues: 3-isopropylmalate dehydrogenase (362 aa).

An NAD(+)-binding site is contributed by 78-91; that stretch reads GPKWEHLAPNDQPE. Substrate-binding residues include Arg-99, Arg-109, Arg-138, and Asp-227. Asp-227, Asp-251, and Asp-255 together coordinate Mg(2+). An NAD(+)-binding site is contributed by 285–297; the sequence is GSAPDIAGKNIAN.

This sequence belongs to the isocitrate and isopropylmalate dehydrogenases family. LeuB type 1 subfamily. Homodimer. Requires Mg(2+) as cofactor. Mn(2+) serves as cofactor.

The protein resides in the cytoplasm. It catalyses the reaction (2R,3S)-3-isopropylmalate + NAD(+) = 4-methyl-2-oxopentanoate + CO2 + NADH. The protein operates within amino-acid biosynthesis; L-leucine biosynthesis; L-leucine from 3-methyl-2-oxobutanoate: step 3/4. Catalyzes the oxidation of 3-carboxy-2-hydroxy-4-methylpentanoate (3-isopropylmalate) to 3-carboxy-4-methyl-2-oxopentanoate. The product decarboxylates to 4-methyl-2 oxopentanoate. This Photobacterium profundum (strain SS9) protein is 3-isopropylmalate dehydrogenase.